Consider the following 1081-residue polypeptide: Dyslexia-associated protein KIAA0319 homolog (1081 aa).

The signal sequence occupies residues 1 to 22 (MVSPPGVLSSLLLLAAMAGGSS). Positions 23 to 99 (QQCSEGRTYS…PRTTGPIRSY (77 aa)) constitute an MANSC domain. Residues 23–964 (QQCSEGRTYS…WDGESNCEWS (942 aa)) lie on the Extracellular side of the membrane. 3 disordered regions span residues 141 to 160 (LPFL…SDDY), 168 to 216 (LQPS…DLTP), and 228 to 298 (NEST…TTVE). 3 stretches are compositionally biased toward polar residues: residues 197–209 (ASAT…ASTE), 228–253 (NEST…TASP), and 283–298 (HNPS…TTVE). 5 PKD domains span residues 345–436 (AVSA…VMPA), 444–533 (VAIV…IRGS), 539–629 (VANA…VQAE), 630–723 (NNQA…VKKE), and 729–820 (RAQA…VLPD). N430 and N522 each carry an N-linked (GlcNAc...) asparagine glycan. A helical membrane pass occupies residues 965 to 985 (VFYVAALALTLTVLTGAVTWV). At 986 to 1081 (CICCCRRRKR…VSFGYYSKDR (96 aa)) the chain is on the cytoplasmic side. Residues 1004–1007 (YTIL) carry the Endocytosis signal motif.

In terms of assembly, homodimer. Interacts with AP2M1; required for clathrin-mediated endocytosis. Post-translationally, N-glycosylated. O-glycosylated. In terms of processing, shedding of the extracellular domain and intramembrane cleavage produce several proteolytic products. The intramembrane cleavage releases a soluble cytoplasmic polypeptide that translocates to the nucleolus. In terms of tissue distribution, highly expressed during development in ventricular zone, intermediate zone, cortical plate, striatum, hippocampus, and brain stem.

Its subcellular location is the cell membrane. It is found in the early endosome membrane. Its function is as follows. Involved in neuronal migration during development of the cerebral neocortex. May function in a cell autonomous and a non-cell autonomous manner and play a role in appropriate adhesion between migrating neurons and radial glial fibers. May also regulate growth and differentiation of dendrites. The protein is Dyslexia-associated protein KIAA0319 homolog of Rattus norvegicus (Rat).